A 76-amino-acid polypeptide reads, in one-letter code: ATP synthase subunit c (76 aa).

2 helical membrane-spanning segments follow: residues 5–25 (GIIA…GIGI) and 54–74 (AALA…LVFL).

This sequence belongs to the ATPase C chain family. F-type ATPases have 2 components, F(1) - the catalytic core - and F(0) - the membrane proton channel. F(1) has five subunits: alpha(3), beta(3), gamma(1), delta(1), epsilon(1). F(0) has three main subunits: a(1), b(2) and c(10-14). The alpha and beta chains form an alternating ring which encloses part of the gamma chain. F(1) is attached to F(0) by a central stalk formed by the gamma and epsilon chains, while a peripheral stalk is formed by the delta and b chains.

The protein resides in the cell membrane. Its function is as follows. F(1)F(0) ATP synthase produces ATP from ADP in the presence of a proton or sodium gradient. F-type ATPases consist of two structural domains, F(1) containing the extramembraneous catalytic core and F(0) containing the membrane proton channel, linked together by a central stalk and a peripheral stalk. During catalysis, ATP synthesis in the catalytic domain of F(1) is coupled via a rotary mechanism of the central stalk subunits to proton translocation. Key component of the F(0) channel; it plays a direct role in translocation across the membrane. A homomeric c-ring of between 10-14 subunits forms the central stalk rotor element with the F(1) delta and epsilon subunits. The chain is ATP synthase subunit c from Ruminiclostridium cellulolyticum (strain ATCC 35319 / DSM 5812 / JCM 6584 / H10) (Clostridium cellulolyticum).